We begin with the raw amino-acid sequence, 321 residues long: Phospho-N-acetylmuramoyl-pentapeptide-transferase (321 aa).

The next 10 membrane-spanning stretches (helical) occupy residues 1 to 21 (MIFV…PVLI), 50 to 70 (MGGL…IIFV), 76 to 96 (IILL…DDYI), 112 to 132 (FLAQ…FHLV), 140 to 160 (IPFT…IVFW), 176 to 196 (GLAT…SFVL), 200 to 220 (AIGI…PYNI), 225 to 245 (VFMG…ISIM), 250 to 270 (LSLI…MLQV), and 300 to 320 (VVTV…WIGV).

Belongs to the glycosyltransferase 4 family. MraY subfamily. Mg(2+) is required as a cofactor.

The protein localises to the cell membrane. The catalysed reaction is UDP-N-acetyl-alpha-D-muramoyl-L-alanyl-gamma-D-glutamyl-L-lysyl-D-alanyl-D-alanine + di-trans,octa-cis-undecaprenyl phosphate = Mur2Ac(oyl-L-Ala-gamma-D-Glu-L-Lys-D-Ala-D-Ala)-di-trans,octa-cis-undecaprenyl diphosphate + UMP. It functions in the pathway cell wall biogenesis; peptidoglycan biosynthesis. Functionally, catalyzes the initial step of the lipid cycle reactions in the biosynthesis of the cell wall peptidoglycan: transfers peptidoglycan precursor phospho-MurNAc-pentapeptide from UDP-MurNAc-pentapeptide onto the lipid carrier undecaprenyl phosphate, yielding undecaprenyl-pyrophosphoryl-MurNAc-pentapeptide, known as lipid I. The protein is Phospho-N-acetylmuramoyl-pentapeptide-transferase of Staphylococcus aureus (strain MSSA476).